Consider the following 229-residue polypeptide: 2-C-methyl-D-erythritol 4-phosphate cytidylyltransferase (229 aa).

It belongs to the IspD/TarI cytidylyltransferase family. IspD subfamily.

The catalysed reaction is 2-C-methyl-D-erythritol 4-phosphate + CTP + H(+) = 4-CDP-2-C-methyl-D-erythritol + diphosphate. Its pathway is isoprenoid biosynthesis; isopentenyl diphosphate biosynthesis via DXP pathway; isopentenyl diphosphate from 1-deoxy-D-xylulose 5-phosphate: step 2/6. Its function is as follows. Catalyzes the formation of 4-diphosphocytidyl-2-C-methyl-D-erythritol from CTP and 2-C-methyl-D-erythritol 4-phosphate (MEP). This is 2-C-methyl-D-erythritol 4-phosphate cytidylyltransferase from Neisseria meningitidis serogroup A / serotype 4A (strain DSM 15465 / Z2491).